The primary structure comprises 362 residues: Acetylajmalan esterase 2 (362 aa).

A signal peptide spans 1–23 (MGFAARPFHIVFSLFVLAGATQA). The Nucleophile role is filled by serine 38. 4 N-linked (GlcNAc...) asparagine glycosylation sites follow: asparagine 100, asparagine 118, asparagine 151, and asparagine 202. Active-site residues include aspartate 335 and histidine 338.

The protein belongs to the 'GDSL' lipolytic enzyme family. As to expression, confined to roots.

It carries out the reaction 17-O-acetylnorajmaline + H2O = norajmaline + acetate + H(+). It catalyses the reaction 17-O-acetylajmaline + H2O = ajmaline + acetate + H(+). It functions in the pathway alkaloid biosynthesis; ajmaline biosynthesis. Its function is as follows. Acetylesterase involved in the biosynthesis of ajmaline-type monoterpenoid indole alkaloids (MIAs) natural products, important plant-derived pharmaceuticals used in the therapy of heart disorders. Deacetylates 17-O-acetylnorajmaline to produce norajmaline. May also catalyze the conversion of 17-O-acetylajmaline to ajmaline. This chain is Acetylajmalan esterase 2, found in Rauvolfia serpentina (Serpentine wood).